Reading from the N-terminus, the 795-residue chain is Lon protease 1 (795 aa).

Residues 9–204 enclose the Lon N-terminal domain; that stretch reads LPVLPLRNTV…RVLALLLRDL (196 aa). 360–367 contributes to the ATP binding site; sequence GPPGVGKT. Residues 596–777 form the Lon proteolytic domain; it reads EPQVGAAQGL…GEVLKLLLLP (182 aa). Active-site residues include Ser683 and Lys726.

This sequence belongs to the peptidase S16 family. As to quaternary structure, homohexamer. Organized in a ring with a central cavity.

It localises to the cytoplasm. It carries out the reaction Hydrolysis of proteins in presence of ATP.. Its function is as follows. ATP-dependent serine protease that mediates the selective degradation of mutant and abnormal proteins as well as certain short-lived regulatory proteins. Required for cellular homeostasis and for survival from DNA damage and developmental changes induced by stress. Degrades polypeptides processively to yield small peptide fragments that are 5 to 10 amino acids long. Binds to DNA in a double-stranded, site-specific manner. This is Lon protease 1 from Thermus thermophilus (strain ATCC BAA-163 / DSM 7039 / HB27).